The chain runs to 135 residues: Large ribosomal subunit protein uL16c (135 aa).

This sequence belongs to the universal ribosomal protein uL16 family. As to quaternary structure, part of the 50S ribosomal subunit.

Its subcellular location is the plastid. It localises to the chloroplast. The chain is Large ribosomal subunit protein uL16c from Phaseolus vulgaris (Kidney bean).